We begin with the raw amino-acid sequence, 845 residues long: Extended synaptotagmin-2 (845 aa).

Positions 1-17 (MSSAGGEGPEAGPGRAG) are enriched in gly residues. The interval 1–26 (MSSAGGEGPEAGPGRAGGRSEPEAPG) is disordered. Over 1-27 (MSSAGGEGPEAGPGRAGGRSEPEAPGS) the chain is Cytoplasmic. The chain crosses the membrane as a helical span at residues 28-48 (ALSVDLPGLLGQLARSFALLL). The Lumenal segment spans residues 49 to 51 (PVY). The chain crosses the membrane as a helical span at residues 52–72 (ALGYLGLSFSWVLLALGLLAW). Residues 73-845 (CRRSRGLKAS…EDGTRPQVIT (773 aa)) are Cytoplasmic-facing. In terms of domain architecture, SMP-LTD spans 115 to 294 (DTERAEWLNK…LPNRITVPLV (180 aa)). C2 domains lie at 293–413 (LVSE…DEWF) and 442–563 (VLAD…QLSN). Ca(2+)-binding residues include lysine 324, aspartate 325, aspartate 337, aspartate 384, glutamate 385, aspartate 386, aspartate 388, aspartate 390, and aspartate 391. Residues 584–664 (QERPPDYQHS…RDLGRSSSSL (81 aa)) are disordered. Residues 612–628 (SQMSASPGTGGANTAPS) are compositionally biased toward polar residues. 2 positions are modified to phosphoserine: serine 615 and serine 617. Phosphothreonine is present on threonine 629. Basic and acidic residues predominate over residues 634-645 (VDDKPAMEEKPQ). Phosphoserine occurs at positions 660, 662, 663, 667, 679, 682, and 685. The region spanning 710–832 (PLGQIQLTIR…ELAKGWTQWY (123 aa)) is the C2 3 domain. The interval 757-764 (KRRSGRRK) is required for phosphatidylinositol 4,5-bisphosphate-dependent location at the cell membrane.

Belongs to the extended synaptotagmin family. Homodimer. Interacts with ESYT1 and ESYT3. Interacts with FGFR1 that has been activated by FGF1 binding. Interacts with the AP-2 complex; identified in a complex with the AP-2 complex and FGFR1.

Its subcellular location is the cell membrane. The protein resides in the endoplasmic reticulum membrane. Tethers the endoplasmic reticulum to the cell membrane and promotes the formation of appositions between the endoplasmic reticulum and the cell membrane. Binds glycerophospholipids in a barrel-like domain and may play a role in cellular lipid transport. Plays a role in FGF signaling via its role in the rapid internalization of FGFR1 that has been activated by FGF1 binding; this occurs most likely via the AP-2 complex. Promotes the localization of SACM1L at endoplasmic reticulum-plasma membrane contact sites (EPCS). The protein is Extended synaptotagmin-2 (Esyt2) of Mus musculus (Mouse).